Here is a 250-residue protein sequence, read N- to C-terminus: AA9 family lytic polysaccharide monooxygenase E (250 aa).

An N-terminal signal peptide occupies residues 1–21 (MAMSKIMSLTGLLASASLVAG). Cu(2+) is bound by residues histidine 22 and histidine 107. 2 cysteine pairs are disulfide-bonded: cysteine 77/cysteine 199 and cysteine 118/cysteine 122. Asparagine 159 carries an N-linked (GlcNAc...) asparagine glycan. Positions 185 and 194 each coordinate O2. Tyrosine 196 contacts Cu(2+).

Belongs to the polysaccharide monooxygenase AA9 family. It depends on Cu(2+) as a cofactor.

It localises to the secreted. The enzyme catalyses [(1-&gt;4)-beta-D-glucosyl]n+m + reduced acceptor + O2 = 4-dehydro-beta-D-glucosyl-[(1-&gt;4)-beta-D-glucosyl]n-1 + [(1-&gt;4)-beta-D-glucosyl]m + acceptor + H2O.. Functionally, lytic polysaccharide monooxygenase (LPMO) that depolymerizes crystalline and amorphous polysaccharides via the oxidation of scissile alpha- or beta-(1-4)-glycosidic bonds, yielding C1 or C4 oxidation products. Catalysis by LPMOs requires the reduction of the active-site copper from Cu(II) to Cu(I) by a reducing agent and H(2)O(2) or O(2) as a cosubstrate. In Aspergillus tamarii, this protein is AA9 family lytic polysaccharide monooxygenase E.